A 726-amino-acid chain; its full sequence is Putative tyrosine-protein kinase AmsA (726 aa).

A run of 2 helical transmembrane segments spans residues 32-52 (WMIV…SLFA) and 425-445 (ILIV…LVLM).

The protein belongs to the etk/wzc family.

Its subcellular location is the cell inner membrane. The enzyme catalyses L-tyrosyl-[protein] + ATP = O-phospho-L-tyrosyl-[protein] + ADP + H(+). The protein operates within glycan metabolism; exopolysaccharide biosynthesis. Involved in the biosynthesis of amylovoran which functions as a virulence factor. The sequence is that of Putative tyrosine-protein kinase AmsA (amsA) from Erwinia amylovora (Fire blight bacteria).